Here is a 91-residue protein sequence, read N- to C-terminus: ATP synthase epsilon chain (91 aa).

It belongs to the ATPase epsilon chain family. As to quaternary structure, F-type ATPases have 2 components, CF(1) - the catalytic core - and CF(0) - the membrane proton channel. CF(1) has five subunits: alpha(3), beta(3), gamma(1), delta(1), epsilon(1). CF(0) has three main subunits: a, b and c.

The protein resides in the cell membrane. In terms of biological role, produces ATP from ADP in the presence of a proton gradient across the membrane. This is ATP synthase epsilon chain (atpC) from Micrococcus luteus (strain ATCC 4698 / DSM 20030 / JCM 1464 / CCM 169 / CCUG 5858 / IAM 1056 / NBRC 3333 / NCIMB 9278 / NCTC 2665 / VKM Ac-2230) (Micrococcus lysodeikticus).